Reading from the N-terminus, the 435-residue chain is Maltodextrin transport system permease protein MalC (435 aa).

10 consecutive transmembrane segments (helical) span residues 34–54 (GFIF…LATP), 73–93 (FMLI…LFYF), 130–150 (YLLI…PVIV), 199–219 (IIWA…TAII), 230–250 (IFGV…ILTF), 263–283 (TQVL…LIPW), 294–314 (LIMM…LGIL), 338–358 (NITF…QYTF), 371–391 (GGGP…ISWI), and 404–424 (MAAA…MIAF). The 229-residue stretch at 195 to 423 (LSWTIIWALA…IIVISISMIA (229 aa)) folds into the ABC transmembrane type-1 domain.

The protein belongs to the binding-protein-dependent transport system permease family. MalFG subfamily.

The protein localises to the cell membrane. In terms of biological role, part of the binding-protein-dependent transport system for maltodextrin; probably responsible for the translocation of the substrate across the membrane. This Streptococcus pneumoniae serotype 4 (strain ATCC BAA-334 / TIGR4) protein is Maltodextrin transport system permease protein MalC (malC).